Consider the following 513-residue polypeptide: Serine/threonine-protein kinase PBL27 (513 aa).

A disordered region spans residues 1-61; it reads MSGCLPCFGS…KKELTAPKEG (61 aa). Residues cysteine 4 and cysteine 7 are each lipidated (S-palmitoyl cysteine). Basic and acidic residues-rich tracts occupy residues 15-27 and 38-57; these read AASK…ELSA and ISLD…ELTA. The Protein kinase domain occupies 83–360; the sequence is FRPECLLGEG…GDVVTALTYL (278 aa). ATP is bound by residues 89–97 and lysine 112; that span reads LGEGGFGRV. The active-site Proton acceptor is aspartate 210. Position 244 is a phosphoserine; by CERK1 (serine 244). 2 positions are modified to phosphothreonine; by CERK1: threonine 245 and threonine 250. Over residues 365-378 the composition is skewed to polar residues; the sequence is FDPNAPSGQNSRSG. The disordered stretch occupies residues 365–513; that stretch reads FDPNAPSGQN…GPGSFDSTND (149 aa). Residues serine 392 and serine 401 each carry the phosphoserine modification. Positions 417-428 are enriched in basic and acidic residues; the sequence is NSPDYRRRDMVR. Residues 434 to 446 are compositionally biased toward gly residues; it reads SEGGSETGGGSGR. The segment covering 456–473 has biased composition (polar residues); it reads QESQRGSPASVGRSSRGT. A compositionally biased stretch (basic and acidic residues) spans 475–486; the sequence is RNRDLDRERAVA. Residues 504-513 show a composition bias toward polar residues; the sequence is GPGSFDSTND.

This sequence belongs to the protein kinase superfamily. Ser/Thr protein kinase family. In terms of assembly, interacts with CERK1 (preferentially unphosphorylated) at the plasma membrane. Binds to MAPKKK5 at the plasma membrane; disassociation is induced by chitin perception by the CERK1 complex. Also associates with MAPKKK3. Phosphorylated by CERK1 upon elicitation by chitin. In terms of processing, palmitoylation at Cys-4 and Cys-7 are required for plasma membrane location.

Its subcellular location is the cell membrane. The enzyme catalyses L-seryl-[protein] + ATP = O-phospho-L-seryl-[protein] + ADP + H(+). It carries out the reaction L-threonyl-[protein] + ATP = O-phospho-L-threonyl-[protein] + ADP + H(+). Receptor-like cytoplasmic kinase involved in the transduction of signal between the host cell surface chitin receptor complex CERK1-LYK5 and the intracellular MAPKKK5-dependent mitogen-activated protein kinase (MAPK) cascade that leads to chitin-induced immunity. Phosphorylates and activates MAPKKK5 when phosphorylated by CERK1 after elicitation by chitin. The polypeptide is Serine/threonine-protein kinase PBL27 (Arabidopsis thaliana (Mouse-ear cress)).